The primary structure comprises 138 residues: MRTLGLDLGTKTLGVAVSDEFGWTAQGLETIAIDEERGHYGFERLRAIIDEYGVDTIVVGWPKNMNGTLGPRAEASERFAAKLREEFSLPVVLWDERLSTMAAERMLIAADVSRKKRRKVIDKMAAAVILQSYLDSKR.

Belongs to the YqgF nuclease family.

The protein localises to the cytoplasm. Functionally, could be a nuclease involved in processing of the 5'-end of pre-16S rRNA. The polypeptide is Putative pre-16S rRNA nuclease (Geobacillus thermodenitrificans (strain NG80-2)).